A 248-amino-acid polypeptide reads, in one-letter code: Large ribosomal subunit protein uL29m (248 aa).

2 disordered regions span residues 77 to 107 (VSKYPLPRPVKPKEQEKRPSNPKHGLWGFFG) and 223 to 248 (AYEPPALDVEEPKGEASDSVKTPPSS).

This sequence belongs to the universal ribosomal protein uL29 family. In terms of assembly, component of the mitochondrial large ribosomal subunit. Mature mitochondrial ribosomes consist of a small (37S) and a large (54S) subunit. The 37S subunit contains at least 33 different proteins and 1 molecule of RNA (15S). The 54S subunit contains at least 45 different proteins and 1 molecule of RNA (21S).

It localises to the mitochondrion. This Ajellomyces capsulatus (strain NAm1 / WU24) (Darling's disease fungus) protein is Large ribosomal subunit protein uL29m (MRPL4).